The sequence spans 120 residues: MIVGIGVDLVSVRRMQQLLERFGNRFTARAFSEVEIRDSLQYKNAHAVARHFAKRFAAKEAYVKAVGLGFGRGIEMRGVSVFNDALGKPRIAVSGDVGHNIELSLSDDGEYAIAFVVLHV.

Mg(2+)-binding residues include aspartate 8 and glutamate 60.

Belongs to the P-Pant transferase superfamily. AcpS family. Requires Mg(2+) as cofactor.

The protein localises to the cytoplasm. It catalyses the reaction apo-[ACP] + CoA = holo-[ACP] + adenosine 3',5'-bisphosphate + H(+). Functionally, transfers the 4'-phosphopantetheine moiety from coenzyme A to a Ser of acyl-carrier-protein. The chain is Holo-[acyl-carrier-protein] synthase from Anaplasma marginale (strain St. Maries).